The following is a 120-amino-acid chain: Immunogenic miracidial antigen 5D (120 aa).

Residues 41-120 (HIDVGDEDYH…PKKYGSGYKH (80 aa)) are disordered. Acidic residues predominate over residues 45 to 66 (GDEDYHDGDDDVDYTDDVDDVD).

The protein belongs to the immunogenic miracidial antigen family.

The polypeptide is Immunogenic miracidial antigen 5D (5D) (Schistosoma japonicum (Blood fluke)).